The primary structure comprises 440 residues: ATP-dependent protease ATPase subunit HslU (440 aa).

Residues Ile18, 60 to 65 (GVGKTE), Asp252, Glu318, and Arg390 contribute to the ATP site.

Belongs to the ClpX chaperone family. HslU subfamily. In terms of assembly, a double ring-shaped homohexamer of HslV is capped on each side by a ring-shaped HslU homohexamer. The assembly of the HslU/HslV complex is dependent on binding of ATP.

The protein resides in the cytoplasm. Its function is as follows. ATPase subunit of a proteasome-like degradation complex; this subunit has chaperone activity. The binding of ATP and its subsequent hydrolysis by HslU are essential for unfolding of protein substrates subsequently hydrolyzed by HslV. HslU recognizes the N-terminal part of its protein substrates and unfolds these before they are guided to HslV for hydrolysis. The sequence is that of ATP-dependent protease ATPase subunit HslU from Acidithiobacillus ferrooxidans (strain ATCC 23270 / DSM 14882 / CIP 104768 / NCIMB 8455) (Ferrobacillus ferrooxidans (strain ATCC 23270)).